Consider the following 391-residue polypeptide: Putative gustatory receptor 98a (391 aa).

The Cytoplasmic segment spans residues 1-31 (MEQMSGELHAASLLYMRRLMKCLGMLPFGQN). The helical transmembrane segment at 32–52 (LFSKGFCYVLLFVSLGFSSYW) threads the bilayer. At 53–74 (RFSFDYEFDYDFLNDRFSSTID) the chain is on the extracellular side. A helical membrane pass occupies residues 75 to 95 (LSNFVALVLGHAIIVLELLWG). Residues 96 to 128 (NCSKDVDRQLQAIHSQIKLQLGTSNSTDRVRRY) lie on the Cytoplasmic side of the membrane. A helical membrane pass occupies residues 129–149 (CNWIYGSLIIRWLIFIVVTIY). At 150–173 (SNRALTINATYSELVFLARFSEFT) the chain is on the extracellular side. Asn157 is a glycosylation site (N-linked (GlcNAc...) asparagine). A helical transmembrane segment spans residues 174-194 (LYCAVILFIYQELIVGGSNVL). At 195–239 (DELYRTRYEMWSIRRLSLQKLAKLQAIHNSLWQAIRCLECYFQLS) the chain is on the cytoplasmic side. A helical transmembrane segment spans residues 240–260 (LITLLMKFFIDTSALPYWLYL). Over 261 to 272 (SRVEHTRVAVQH) the chain is Extracellular. The chain crosses the membrane as a helical span at residues 273–293 (YVATVECIKLLEIVVPCYLCT). At 294 to 347 (RCDAMQRKFLSMFYTVTTDRRSSQLNAALRSLNLQLSQEKYKFSAGGMVDINTE) the chain is on the cytoplasmic side. The helical transmembrane segment at 348–368 (MLGKFFFGMISYIVICIQFSI) threads the bilayer. Topologically, residues 369–391 (NFRAKKMSNEQMSQNITSTSAPI) are extracellular. Asn383 is a glycosylation site (N-linked (GlcNAc...) asparagine).

Belongs to the insect chemoreceptor superfamily. Gustatory receptor (GR) family. Gr2a subfamily.

Its subcellular location is the cell membrane. In terms of biological role, probable gustatory receptor which mediates acceptance or avoidance behavior, depending on its substrates. The chain is Putative gustatory receptor 98a (Gr98a) from Drosophila melanogaster (Fruit fly).